The chain runs to 478 residues: ATP-dependent RNA helicase DDX19A (478 aa).

A2 bears the N-acetylalanine mark. The N-terminal lobe stretch occupies residues 2–299 (ATDSWALAVD…DPNVIKLKRE (298 aa)). K26 is covalently cross-linked (Glycyl lysine isopeptide (Lys-Gly) (interchain with G-Cter in SUMO1); alternate). Residue K26 forms a Glycyl lysine isopeptide (Lys-Gly) (interchain with G-Cter in SUMO2); alternate linkage. The residue at position 42 (T42) is a Phosphothreonine. The N-terminal helix stretch occupies residues 54-67 (DRAAQSLLNKLIRS). The short motif at 91 to 119 (KSFEELRLKPQLLQGVYAMGFNRPSKIQE) is the Q motif element. Residues Q118 and 137-144 (SQSGTGKT) each bind ATP. In terms of domain architecture, Helicase ATP-binding spans 124 to 294 (MMLAEPPQNL…QKVVPDPNVI (171 aa)). The short motif at 241–244 (DEAD) is the DEAD box element. Positions 300 to 478 (EETLDTIKQY…DLDEIEKIAN (179 aa)) are C-terminal lobe. Residues 305–473 (TIKQYYVLCS…RLDTDDLDEI (169 aa)) enclose the Helicase C-terminal domain. Residues R428 and R431 each contribute to the ATP site.

It belongs to the DEAD box helicase family. DDX19/DBP5 subfamily.

The protein localises to the cytoplasm. Its subcellular location is the nucleus. It localises to the nucleoplasm. It catalyses the reaction ATP + H2O = ADP + phosphate + H(+). Its function is as follows. ATP-dependent RNA helicase involved in mRNA export from the nucleus. Rather than unwinding RNA duplexes, DDX19 functions as a remodeler of ribonucleoprotein particles, whereby proteins bound to nuclear mRNA are dissociated and replaced by cytoplasmic mRNA binding proteins. The sequence is that of ATP-dependent RNA helicase DDX19A (DDX19A) from Homo sapiens (Human).